The following is a 346-amino-acid chain: Hydroxycarboxylic acid receptor 1 (346 aa).

Residues 1–21 lie on the Extracellular side of the membrane; the sequence is MYNGSCCRIEGDTISQVMPPL. N-linked (GlcNAc...) asparagine glycosylation occurs at asparagine 3. Residues 22 to 42 form a helical membrane-spanning segment; sequence LIVAFVLGALGNGVALCGFCF. At 43–49 the chain is on the cytoplasmic side; the sequence is HMKTWKP. A helical transmembrane segment spans residues 50–70; that stretch reads STVYLFNLAVADFLLMICLPF. At 71–89 the chain is on the extracellular side; that stretch reads RTDYYLRRRHWAFGDIPCR. The cysteines at positions 88 and 165 are disulfide-linked. Residues 90–110 form a helical membrane-spanning segment; sequence VGLFTLAMNRAGSIVFLTVVA. Topologically, residues 111-130 are cytoplasmic; sequence ADRYFKVVHPHHAVNTISTR. The helical transmembrane segment at 131–151 threads the bilayer; sequence VAAGIVCTLWALVILGTVYLL. The Extracellular portion of the chain corresponds to 152–182; the sequence is LENHLCVQETAVSCESFIMESANGWHDIMFQ. A helical transmembrane segment spans residues 183–203; the sequence is LEFFMPLGIILFCSFKIVWSL. Over 204 to 220 the chain is Cytoplasmic; that stretch reads RRRQQLARQARMKKATR. Residues 221–241 form a helical membrane-spanning segment; the sequence is FIMVVAIVFITCYLPSVSARL. Residues 242–261 are Extracellular-facing; it reads YFLWTVPSSACDPSVHGALH. A helical transmembrane segment spans residues 262-281; that stretch reads ITLSFTYMNSMLDPLVYYFS. Residues 282–346 are Cytoplasmic-facing; it reads SPSFPKFYNK…QWDPHIVEWH (65 aa).

The protein belongs to the G-protein coupled receptor 1 family. As to expression, expressed abundantly in brown and white fat. It also detectable at lower levels in liver, kidney, skeletal muscle, brain and pituitary. Not detected in frontal, temporal and occipital lobes of the cortex, basal forebrain, caudate nucleus, nucleus accumbens and hippocampus.

It localises to the cell membrane. Its function is as follows. Acts as a receptor for L-lactate and mediates its anti-lipolytic effect through a G(i)-protein-mediated pathway. This Homo sapiens (Human) protein is Hydroxycarboxylic acid receptor 1 (HCAR1).